Consider the following 215-residue polypeptide: Cytochrome b6 (215 aa).

A helical transmembrane segment spans residues 32-52 (IFYCLGGITLTCFLIQVATGF). Cys-35 contacts heme c. His-86 and His-100 together coordinate heme b. 3 consecutive transmembrane segments (helical) span residues 90-110 (ASMM…TGGF), 116-136 (LTWV…VTGY), and 186-206 (LHTF…FLMI). His-187 and His-202 together coordinate heme b.

It belongs to the cytochrome b family. PetB subfamily. In terms of assembly, the 4 large subunits of the cytochrome b6-f complex are cytochrome b6, subunit IV (17 kDa polypeptide, PetD), cytochrome f and the Rieske protein, while the 4 small subunits are PetG, PetL, PetM and PetN. The complex functions as a dimer. Heme b serves as cofactor. The cofactor is heme c.

The protein localises to the plastid. Its subcellular location is the chloroplast thylakoid membrane. Functionally, component of the cytochrome b6-f complex, which mediates electron transfer between photosystem II (PSII) and photosystem I (PSI), cyclic electron flow around PSI, and state transitions. The chain is Cytochrome b6 from Spirogyra maxima (Green alga).